Here is a 449-residue protein sequence, read N- to C-terminus: Putative F-box/LRR-repeat protein At3g44090 (449 aa).

Residues 23 to 77 (LASMDCLPDDLLVQILYFLPTKEAISTSLLSKRWRTLYSLVHNLDLDDYIFWHHE) form the F-box domain. LRR repeat units follow at residues 133–163 (YYNLQKDSLWQFGFPYKVFTSTKLVKLSLGT), 186–212 (YIWFEDNQLSDVFLAACPALEDLTIHH), 214–231 (FRPFLISSKNLKKLSVTI), 247–278 (TPNVVDLYYSDFPRPIAPHCHLDSLAKVELDL), 286–311 (RQVQNDADVKNLISEIRNVKTLHLTY), and 320–345 (SKKRDWKVLPLLLERSPNLKTLVLSG).

This is Putative F-box/LRR-repeat protein At3g44090 from Arabidopsis thaliana (Mouse-ear cress).